Reading from the N-terminus, the 109-residue chain is LSM2-LSM8 complex subunit LSM8 (109 aa).

The Sm domain occupies Met-1–Glu-70.

The protein belongs to the snRNP Sm proteins family. As to quaternary structure, component of the heptameric LSM2-LSM8 complex that forms a seven-membered ring structure with a donut shape; an RNA strand can pass through the hole in the center of the ring structure. The LSm subunits are arranged in the order LSM8, LSM2, LSM3, LSM6, LSM5, LSM7 and LSM4. Component of the spliceosome U4/U6-U5 tri-snRNP complex composed of the U4, U6 and U5 snRNAs and at least PRP3, PRP4, PRP6, PRP8, PRP18, PRP31, PRP38, SNU13, SNU23, SNU66, SNU114, SPP381, SMB1, SMD1, SMD2, SMD3, SMX2, SMX3, LSM2, LSM3, LSM4, LSM5, LSM6, LSM7, LSM8, BRR2 and DIB1.

It is found in the nucleus. Its subcellular location is the cytoplasm. Functionally, component of the nuclear LSM2-LSM8 complex, which is involved in spliceosome assembly. The LSM2-LSM8 complex plays a role in the biogenesis of the spliceosomal U4/U6-U5 tri-snRNP complex by accelerating PRP24-mediated annealing of U4/U6 di-snRNA. The LSM2-LSM8 complex binds U6 snRNA terminating with a non-cyclic 3' phosphate group. LSM2-LSM8 is probably also involved in degradation of nuclear pre-mRNA by targeting them for decapping. LSM2-LSM8 could be involved in processing of pre-tRNAs, pre-rRNAs and U3 snoRNA, although involvement may be indirect. This Saccharomyces cerevisiae (strain ATCC 204508 / S288c) (Baker's yeast) protein is LSM2-LSM8 complex subunit LSM8 (LSM8).